We begin with the raw amino-acid sequence, 296 residues long: Phosphatidylserine decarboxylase proenzyme (296 aa).

Residues Asp-92, His-149, and Ser-251 each act as charge relay system; for autoendoproteolytic cleavage activity in the active site. Ser-251 acts as the Schiff-base intermediate with substrate; via pyruvic acid; for decarboxylase activity in catalysis. Pyruvic acid (Ser); by autocatalysis is present on Ser-251.

It belongs to the phosphatidylserine decarboxylase family. PSD-B subfamily. Prokaryotic type I sub-subfamily. As to quaternary structure, heterodimer of a large membrane-associated beta subunit and a small pyruvoyl-containing alpha subunit. Pyruvate serves as cofactor. In terms of processing, is synthesized initially as an inactive proenzyme. Formation of the active enzyme involves a self-maturation process in which the active site pyruvoyl group is generated from an internal serine residue via an autocatalytic post-translational modification. Two non-identical subunits are generated from the proenzyme in this reaction, and the pyruvate is formed at the N-terminus of the alpha chain, which is derived from the carboxyl end of the proenzyme. The autoendoproteolytic cleavage occurs by a canonical serine protease mechanism, in which the side chain hydroxyl group of the serine supplies its oxygen atom to form the C-terminus of the beta chain, while the remainder of the serine residue undergoes an oxidative deamination to produce ammonia and the pyruvoyl prosthetic group on the alpha chain. During this reaction, the Ser that is part of the protease active site of the proenzyme becomes the pyruvoyl prosthetic group, which constitutes an essential element of the active site of the mature decarboxylase.

It is found in the cell membrane. It catalyses the reaction a 1,2-diacyl-sn-glycero-3-phospho-L-serine + H(+) = a 1,2-diacyl-sn-glycero-3-phosphoethanolamine + CO2. It functions in the pathway phospholipid metabolism; phosphatidylethanolamine biosynthesis; phosphatidylethanolamine from CDP-diacylglycerol: step 2/2. Functionally, catalyzes the formation of phosphatidylethanolamine (PtdEtn) from phosphatidylserine (PtdSer). In Hahella chejuensis (strain KCTC 2396), this protein is Phosphatidylserine decarboxylase proenzyme.